A 160-amino-acid chain; its full sequence is pH-gated potassium channel KcsA (160 aa).

Topologically, residues M1–R27 are cytoplasmic. The helical transmembrane segment at A28–A50 threads the bilayer. Over E51–T61 the chain is Extracellular. An intramembrane region (helical; Pore-forming) is located at residues Y62–T72. The segment at residues A73 to D80 is an intramembrane region (pore-forming). The Selectivity filter signature appears at T75–D80. Over L81–W87 the chain is Extracellular. The chain crosses the membrane as a helical span at residues G88–A111. Residues T112–R160 lie on the Cytoplasmic side of the membrane.

This sequence belongs to the potassium channel family. In terms of assembly, homotetramer.

It is found in the cell membrane. In terms of biological role, acts as a pH-gated potassium ion channel; changing the cytosolic pH from 7 to 4 opens the channel. This Streptomyces coelicolor (strain ATCC BAA-471 / A3(2) / M145) protein is pH-gated potassium channel KcsA (kcsA).